A 399-amino-acid polypeptide reads, in one-letter code: Elongation factor Tu (399 aa).

The tr-type G domain occupies 10–209 (KPHVNIGTIG…AVDDYIPTPV (200 aa)). A G1 region spans residues 19-26 (GHVDHGKT). 19–26 (GHVDHGKT) contributes to the GTP binding site. Residue T26 coordinates Mg(2+). The G2 stretch occupies residues 62 to 66 (GITIN). Residues 83–86 (DCPG) form a G3 region. Residues 83 to 87 (DCPGH) and 138 to 141 (NKCD) contribute to the GTP site. The G4 stretch occupies residues 138–141 (NKCD). Positions 175 to 177 (SAY) are G5.

The protein belongs to the TRAFAC class translation factor GTPase superfamily. Classic translation factor GTPase family. EF-Tu/EF-1A subfamily. In terms of assembly, monomer.

The protein resides in the cytoplasm. It catalyses the reaction GTP + H2O = GDP + phosphate + H(+). Its function is as follows. GTP hydrolase that promotes the GTP-dependent binding of aminoacyl-tRNA to the A-site of ribosomes during protein biosynthesis. This is Elongation factor Tu from Bifidobacterium longum (strain DJO10A).